We begin with the raw amino-acid sequence, 355 residues long: Peptide chain release factor 1 (355 aa).

At glutamine 229 the chain carries N5-methylglutamine. Residues 280–299 are disordered; that stretch reads LDRERSAARKGQVGSGDRSE.

This sequence belongs to the prokaryotic/mitochondrial release factor family. In terms of processing, methylated by PrmC. Methylation increases the termination efficiency of RF1.

It localises to the cytoplasm. Its function is as follows. Peptide chain release factor 1 directs the termination of translation in response to the peptide chain termination codons UAG and UAA. This chain is Peptide chain release factor 1, found in Parvibaculum lavamentivorans (strain DS-1 / DSM 13023 / NCIMB 13966).